Here is an 804-residue protein sequence, read N- to C-terminus: Probable replication endonuclease from prophage-like region (804 aa).

Active-site O-(5'-phospho-DNA)-tyrosine intermediate residues include tyrosine 498 and tyrosine 502.

This sequence belongs to the phage GPA family.

Possible endonuclease which induces a single-strand cut and initiates DNA replication. The chain is Probable replication endonuclease from prophage-like region from Shigella boydii serotype 4 (strain Sb227).